Here is a 398-residue protein sequence, read N- to C-terminus: Spermatogenesis associated 6-like protein (398 aa).

Positions 170 to 215 (KLNGPANNRKKKPKEKNSDQLSKGTPFWGPSPQRLHLHRPTQRNPG) are disordered. Phosphoserine is present on residues Ser269 and Ser272.

Belongs to the SPATA6 family.

This chain is Spermatogenesis associated 6-like protein (Spata6l), found in Rattus norvegicus (Rat).